The sequence spans 70 residues: Large ribosomal subunit protein eL38 (70 aa).

It belongs to the eukaryotic ribosomal protein eL38 family.

The polypeptide is Large ribosomal subunit protein eL38 (rpl-38) (Caenorhabditis elegans).